We begin with the raw amino-acid sequence, 190 residues long: Frizzled-6 (190 aa).

The 20-residue stretch at 1–20 (FGFAWPEELECSRLVNCDET) folds into the FZ domain. Over 1-89 (FGFAWPEELE…NYELDVAKSF (89 aa)) the chain is Extracellular. The chain crosses the membrane as a helical span at residues 90 to 110 (IGIVSIFCLCATLFTFLTFLI). Residues 111 to 121 (DVKRFRYPERP) lie on the Cytoplasmic side of the membrane. A helical membrane pass occupies residues 122–142 (IIYYSVCYSIVSLMYFIGFLL). At 143–169 (GNRTACNKADDKLEIGETVVLGSQNKA) the chain is on the extracellular side. The N-linked (GlcNAc...) asparagine glycan is linked to asparagine 144. Residues 170–190 (CTVLFMVLYFFTMAGTIWWVI) traverse the membrane as a helical segment.

The protein belongs to the G-protein coupled receptor Fz/Smo family.

The protein resides in the membrane. Its subcellular location is the cell membrane. The protein localises to the cell surface. It is found in the apical cell membrane. It localises to the cytoplasmic vesicle membrane. In terms of biological role, receptor for Wnt proteins. Most of frizzled receptors are coupled to the beta-catenin canonical signaling pathway, which leads to the activation of disheveled proteins, inhibition of GSK-3 kinase, nuclear accumulation of beta-catenin and activation of Wnt target genes. A second signaling pathway involving PKC and calcium fluxes has been seen for some family members, but it is not yet clear if it represents a distinct pathway or if it can be integrated in the canonical pathway, as PKC seems to be required for Wnt-mediated inactivation of GSK-3 kinase. Both pathways seem to involve interactions with G-proteins. Activation by Wnt5A stimulates PKC activity via a G-protein-dependent mechanism. Involved in transduction and intercellular transmission of polarity information during tissue morphogenesis and/or in differentiated tissues. Together with FZD3, may be involved in the neural tube closure and plays a role in the regulation of the establishment of planar cell polarity (PCP), particularly in the orientation of asymmetric bundles of stereocilia on the apical faces of a subset of auditory and vestibular sensory cells located in the inner ear. The protein is Frizzled-6 (FZD6) of Gallus gallus (Chicken).